Here is a 397-residue protein sequence, read N- to C-terminus: Acetate kinase (397 aa).

Asn-8 provides a ligand contact to Mg(2+). ATP is bound at residue Lys-15. Arg-89 is a substrate binding site. The active-site Proton donor/acceptor is Asp-146. ATP-binding positions include 206–210, 281–283, and 329–333; these read HLGNG, DLR, and GVGEN. Glu-382 is a binding site for Mg(2+).

The protein belongs to the acetokinase family. In terms of assembly, homodimer. The cofactor is Mg(2+). It depends on Mn(2+) as a cofactor.

It localises to the cytoplasm. The enzyme catalyses acetate + ATP = acetyl phosphate + ADP. The protein operates within metabolic intermediate biosynthesis; acetyl-CoA biosynthesis; acetyl-CoA from acetate: step 1/2. Its function is as follows. Catalyzes the formation of acetyl phosphate from acetate and ATP. Can also catalyze the reverse reaction. This chain is Acetate kinase, found in Bacillus mycoides (strain KBAB4) (Bacillus weihenstephanensis).